The primary structure comprises 522 residues: Ankyrin repeat and death domain-containing protein 1A (522 aa).

11 ANK repeats span residues 14 to 43, 47 to 76, 90 to 119, 123 to 152, 158 to 187, 191 to 220, 224 to 253, 257 to 286, 290 to 319, 323 to 352, and 356 to 385; these read PLERQLHEAARQNNVGRMQELIGRRVNTRA, VGRVALHWAAGAGHEQAVRLLLEHEAAVDE, FGMNALLLSAWFGHLRILQILVNSGAKIHC, DGLTLLHCAAQKGHVPVLAFIMEDLEDVAL, LGRTAFHRAAEHGQLDALDFLVGSGCDHNV, EGNTALHLAAGRGHMAVLQRLVDIGLDLEE, EGLTALHSAAGGSHPDCVQLLLRAGSTVNA, KNLSCLHYAALSGSEDVSRVLIHAGGCANV, QGASPLHLAVRHNFPALVRLLINSDSDVNA, RQQTPLHLAAEHAWQDIADMLLIAGVDLNL, and QGKTALAVAVRSNHVSLVDMIIKADRFYRW. In terms of domain architecture, Death spans 413 to 501; sequence SVLWRLASRY…DLAGWSTMAR (89 aa).

The protein is Ankyrin repeat and death domain-containing protein 1A (ANKDD1A) of Homo sapiens (Human).